A 265-amino-acid polypeptide reads, in one-letter code: NAD kinase 2 (265 aa).

The active-site Proton acceptor is N51. NAD(+) contacts are provided by residues 122 to 123 (NE), R149, D151, 162 to 167 (TAYNKS), A186, and N226.

This sequence belongs to the NAD kinase family. Requires a divalent metal cation as cofactor.

It localises to the cytoplasm. The enzyme catalyses NAD(+) + ATP = ADP + NADP(+) + H(+). In terms of biological role, involved in the regulation of the intracellular balance of NAD and NADP, and is a key enzyme in the biosynthesis of NADP. Catalyzes specifically the phosphorylation on 2'-hydroxyl of the adenosine moiety of NAD to yield NADP. The chain is NAD kinase 2 from Halalkalibacterium halodurans (strain ATCC BAA-125 / DSM 18197 / FERM 7344 / JCM 9153 / C-125) (Bacillus halodurans).